Consider the following 445-residue polypeptide: MSTSAAPTPLESRASGPLSGTIRVPGDKSISHRALILGALSVGGTRISGLLEGEDVLNTAKSMRTLGAKVERTGEFAWTVNGVGVGGFAQPAATLDFGNSGTGCRLVMGAVAGCPISAVFDGDASLRSRPMRRILDPLALMGAKVTASAEGGKLPLTLQGASNPVPIEYRTPVASAQIKSAVLLAGLAAPGVTTVIEQEASRDHTELMLKHFGAEIVTTPEGSHGRRIALTGQPELRGAPVIVPADPSSAAFPLVAALIVDGSDLVLSDVMTNPLRTGLFTTLREMGASIEEDDVRGDAGEPMARLRVRASKLKGVEVPPERAPSMIDEYLVLAVAAAYAEGTTIMRGLHELRVKESDRLEATAAMLRVNGVKVEITGDDLIVEGRGHVPGGGLVATHMDHRIAMSALVMGLASDKPVTVDDTAFIATSFPDFIPLMRKAGADFA.

A disordered region spans residues 1-20 (MSTSAAPTPLESRASGPLSG). 3-phosphoshikimate contacts are provided by Lys28, Ser29, and Arg33. Lys28 provides a ligand contact to phosphoenolpyruvate. Positions 101 and 129 each coordinate phosphoenolpyruvate. 4 residues coordinate 3-phosphoshikimate: Ser175, Gln177, Asp328, and Lys355. Gln177 contacts phosphoenolpyruvate. Catalysis depends on Asp328, which acts as the Proton acceptor. Positions 359 and 402 each coordinate phosphoenolpyruvate.

Belongs to the EPSP synthase family. Monomer.

It localises to the cytoplasm. It catalyses the reaction 3-phosphoshikimate + phosphoenolpyruvate = 5-O-(1-carboxyvinyl)-3-phosphoshikimate + phosphate. Its pathway is metabolic intermediate biosynthesis; chorismate biosynthesis; chorismate from D-erythrose 4-phosphate and phosphoenolpyruvate: step 6/7. Functionally, catalyzes the transfer of the enolpyruvyl moiety of phosphoenolpyruvate (PEP) to the 5-hydroxyl of shikimate-3-phosphate (S3P) to produce enolpyruvyl shikimate-3-phosphate and inorganic phosphate. The polypeptide is 3-phosphoshikimate 1-carboxyvinyltransferase (Bradyrhizobium sp. (strain ORS 278)).